Consider the following 260-residue polypeptide: Indole-3-glycerol phosphate synthase (260 aa).

It belongs to the TrpC family.

It carries out the reaction 1-(2-carboxyphenylamino)-1-deoxy-D-ribulose 5-phosphate + H(+) = (1S,2R)-1-C-(indol-3-yl)glycerol 3-phosphate + CO2 + H2O. The protein operates within amino-acid biosynthesis; L-tryptophan biosynthesis; L-tryptophan from chorismate: step 4/5. In Chloroherpeton thalassium (strain ATCC 35110 / GB-78), this protein is Indole-3-glycerol phosphate synthase.